A 485-amino-acid chain; its full sequence is Adenosylhomocysteinase (485 aa).

Substrate contacts are provided by Thr-64, Asp-139, and Glu-205. Residue 206–208 participates in NAD(+) binding; the sequence is TTT. Residues Lys-235 and Asp-239 each coordinate substrate. Residues Asn-240, 269-274, Glu-292, Asn-327, 348-350, and Asn-397 each bind NAD(+); these read GYGDVG and IGH.

It belongs to the adenosylhomocysteinase family. Homotetramer. It depends on NAD(+) as a cofactor.

It carries out the reaction S-adenosyl-L-homocysteine + H2O = L-homocysteine + adenosine. It participates in amino-acid biosynthesis; L-homocysteine biosynthesis; L-homocysteine from S-adenosyl-L-homocysteine: step 1/1. In terms of biological role, adenosylhomocysteine is a competitive inhibitor of S-adenosyl-L-methionine-dependent methyl transferase reactions; therefore adenosylhomocysteinase may play a key role in the control of methylations via regulation of the intracellular concentration of adenosylhomocysteine. The polypeptide is Adenosylhomocysteinase (SAHH) (Triticum aestivum (Wheat)).